We begin with the raw amino-acid sequence, 295 residues long: Small ribosomal subunit protein uS2 (295 aa).

S2 is subject to N-acetylserine. S43 carries the phosphoserine modification. Residue K52 is modified to N6-acetyllysine. The tract at residues 54 to 113 is interaction with PPP1R16B; sequence TWEKLLLAARAIVAIENPADVSVISSRNTGQRAVLKFAAATGATPIAGRFTPGTFTNQIQ. Position 89 is an N6-acetyllysine; alternate (K89). K89 is covalently cross-linked (Glycyl lysine isopeptide (Lys-Gly) (interchain with G-Cter in SUMO2); alternate). T97 carries the phosphothreonine modification. Laminin-binding regions lie at residues 161–180 and 205–229; these read IPCN…MLAR and RDPE…EFQG. [DE]-W-[ST] repeat units follow at residues 230 to 232, 247 to 249, 266 to 268, 275 to 277, and 293 to 295; these read EWT, DWS, and EWS. Residues 242-295 are laminin-binding; it reads QPEVADWSEGVQVPSVPIQQFPTEDWSAQPSTEDWSAAPTAQATEWVGTTTEWS. The disordered stretch occupies residues 266-295; the sequence is DWSAQPSTEDWSAAPTAQATEWVGTTTEWS.

The protein belongs to the universal ribosomal protein uS2 family. In terms of assembly, monomer (37LRP) and homodimer (67LR). Component of the small ribosomal subunit. Mature ribosomes consist of a small (40S) and a large (60S) subunit. The 40S subunit contains about 33 different proteins and 1 molecule of RNA (18S). The 60S subunit contains about 49 different proteins and 3 molecules of RNA (28S, 5.8S and 5S). Interacts with RPS21. Interacts with several laminins including at least LAMB1. Interacts with MDK. The mature dimeric form interacts with PPP1R16B (via its fourth ankyrin repeat). Interacts with PPP1CA only in the presence of PPP1R16B. Acylated. Acylation may be a prerequisite for conversion of the monomeric 37 kDa laminin receptor precursor (37LRP) to the mature dimeric 67 kDa laminin receptor (67LR), and may provide a mechanism for membrane association. In terms of processing, cleaved by stromelysin-3 (ST3) at the cell surface. Cleavage by stromelysin-3 may be a mechanism to alter cell-extracellular matrix interactions.

The protein resides in the cell membrane. It localises to the cytoplasm. It is found in the nucleus. Its function is as follows. Required for the assembly and/or stability of the 40S ribosomal subunit. Required for the processing of the 20S rRNA-precursor to mature 18S rRNA in a late step of the maturation of 40S ribosomal subunits. Also functions as a cell surface receptor for laminin. Plays a role in cell adhesion to the basement membrane and in the consequent activation of signaling transduction pathways. May play a role in cell fate determination and tissue morphogenesis. Also acts as a receptor for several other ligands, including the pathogenic prion protein, viruses, and bacteria. Acts as a PPP1R16B-dependent substrate of PPP1CA. This Bos taurus (Bovine) protein is Small ribosomal subunit protein uS2.